The sequence spans 417 residues: Dihydroorotase (417 aa).

Residues His-60 and His-62 each contribute to the Zn(2+) site. Residues 62–64 (HLR) and Asn-94 contribute to the substrate site. Residues Lys-138, His-167, His-207, and Asp-275 each contribute to the Zn(2+) site. Position 138 is an N6-carboxylysine (Lys-138). Asp-275 is a catalytic residue. Substrate-binding positions include His-279 and 289 to 290 (AG).

It belongs to the metallo-dependent hydrolases superfamily. DHOase family. Class I DHOase subfamily. Zn(2+) serves as cofactor.

The enzyme catalyses (S)-dihydroorotate + H2O = N-carbamoyl-L-aspartate + H(+). The protein operates within pyrimidine metabolism; UMP biosynthesis via de novo pathway; (S)-dihydroorotate from bicarbonate: step 3/3. Its function is as follows. Catalyzes the reversible cyclization of carbamoyl aspartate to dihydroorotate. The chain is Dihydroorotase from Pyrococcus horikoshii (strain ATCC 700860 / DSM 12428 / JCM 9974 / NBRC 100139 / OT-3).